The following is a 311-amino-acid chain: Ketoisovalerate oxidoreductase subunit VorB (311 aa).

Heterotetramer of one alpha, one beta, one delta and one gamma chain.

The enzyme catalyses 3-methyl-2-oxobutanoate + 2 oxidized [2Fe-2S]-[ferredoxin] + CoA = 2-methylpropanoyl-CoA + 2 reduced [2Fe-2S]-[ferredoxin] + CO2 + H(+). The sequence is that of Ketoisovalerate oxidoreductase subunit VorB (vorB) from Pyrococcus furiosus (strain ATCC 43587 / DSM 3638 / JCM 8422 / Vc1).